The primary structure comprises 124 residues: Aspartate 1-decarboxylase (124 aa).

Serine 25 acts as the Schiff-base intermediate with substrate; via pyruvic acid in catalysis. Residue serine 25 is modified to Pyruvic acid (Ser). Position 57 (threonine 57) interacts with substrate. Tyrosine 58 (proton donor) is an active-site residue. Residue 73–75 (GAA) coordinates substrate.

Belongs to the PanD family. In terms of assembly, heterooctamer of four alpha and four beta subunits. Pyruvate is required as a cofactor. Is synthesized initially as an inactive proenzyme, which is activated by self-cleavage at a specific serine bond to produce a beta-subunit with a hydroxyl group at its C-terminus and an alpha-subunit with a pyruvoyl group at its N-terminus.

It localises to the cytoplasm. It catalyses the reaction L-aspartate + H(+) = beta-alanine + CO2. It participates in cofactor biosynthesis; (R)-pantothenate biosynthesis; beta-alanine from L-aspartate: step 1/1. Its function is as follows. Catalyzes the pyruvoyl-dependent decarboxylation of aspartate to produce beta-alanine. The chain is Aspartate 1-decarboxylase from Clostridium beijerinckii (strain ATCC 51743 / NCIMB 8052) (Clostridium acetobutylicum).